Consider the following 305-residue polypeptide: tRNA dimethylallyltransferase (305 aa).

An ATP-binding site is contributed by glycine 8 to serine 15. Threonine 10–serine 15 provides a ligand contact to substrate. The interval aspartate 33–alanine 36 is interaction with substrate tRNA.

Belongs to the IPP transferase family. Monomer. Mg(2+) is required as a cofactor.

It catalyses the reaction adenosine(37) in tRNA + dimethylallyl diphosphate = N(6)-dimethylallyladenosine(37) in tRNA + diphosphate. In terms of biological role, catalyzes the transfer of a dimethylallyl group onto the adenine at position 37 in tRNAs that read codons beginning with uridine, leading to the formation of N6-(dimethylallyl)adenosine (i(6)A). The chain is tRNA dimethylallyltransferase from Aquifex aeolicus (strain VF5).